Reading from the N-terminus, the 521-residue chain is Ribonuclease Y (521 aa).

Residues 5–25 (MMTMILAVIAAAIGFLIGNLL) traverse the membrane as a helical segment. The KH domain occupies 211 to 271 (TVSVVALPSD…VRREVAKLSL (61 aa)). The region spanning 337-430 (VYQHSLEVAF…VQAADALSGA (94 aa)) is the HD domain.

It belongs to the RNase Y family.

It is found in the cell membrane. Functionally, endoribonuclease that initiates mRNA decay. The sequence is that of Ribonuclease Y from Geotalea uraniireducens (strain Rf4) (Geobacter uraniireducens).